We begin with the raw amino-acid sequence, 242 residues long: MSKRLLLLSNSTNIGEEYLFYARQEIKNFLGSSVKKIAFIPFAAVTSTYQHYSEKVRKVFQDIGYEFDAIHLVESSHELIKNAEAVVVGGGNTFHLIHCLHETKLLDDIRNKVSNGTPYIGWSAGSNVACPTIKTSNDMPIIEPISFQGLNLVPFQINPHYTNAVIPNHNGETREQRLEDFLVLNPDIYVVGLPEGTMLKIEDSSIRLIGNKTIYLFKFGEEKQEYYPHDNLDFLLERASFT.

Catalysis depends on charge relay system residues S123, D138, and H160.

Belongs to the peptidase S51 family.

It is found in the cytoplasm. It catalyses the reaction Dipeptidase E catalyzes the hydrolysis of dipeptides Asp-|-Xaa. It does not act on peptides with N-terminal Glu, Asn or Gln, nor does it cleave isoaspartyl peptides.. Functionally, hydrolyzes dipeptides containing N-terminal aspartate residues. May play a role in allowing the cell to use peptide aspartate to spare carbon otherwise required for the synthesis of the aspartate family of amino acids. The chain is Peptidase E from Nostoc sp. (strain PCC 7120 / SAG 25.82 / UTEX 2576).